Here is a 428-residue protein sequence, read N- to C-terminus: Methyl-branched lipid omega-hydroxylase (428 aa).

Cys379 contributes to the heme binding site.

Belongs to the cytochrome P450 family. Requires heme as cofactor.

It catalyses the reaction a methyl-branched lipid + O2 + 2 reduced ferredoxin [iron-sulfur] cluster + 2 H(+) = an omega-hydroxy-methyl-branched lipid + H2O + 2 oxidized ferredoxin [iron-sulfur] cluster.. The enzyme catalyses cholest-4-en-3-one + 6 reduced [2Fe-2S]-[ferredoxin] + 3 O2 + 5 H(+) = (25R)-3-oxocholest-4-en-26-oate + 6 oxidized [2Fe-2S]-[ferredoxin] + 4 H2O. The protein operates within lipid metabolism; branched-chain fatty acid metabolism. Functionally, primarily hydroxylates the omega-carbon of a number of methyl-branched lipids, including (2E,6E)-farnesol, phytanate, geranylgeraniol, 15-methylpalmitate and (2E,6E)-farnesyl diphosphate. Also catalyzes the sequential oxidation of the terminal methyl of cholest-4-en-3-one into (25R)-26-hydroxycholest-4-en-3-one (alcohol), (25R)-26-oxocholest-4-en-3-one (aldehyde), to finally yield the carboxylic acid (25R)-3-oxocholest-4-en-26-oate. Also able to sequentially oxidize cholesterol itself, not only cholest-4-en-3-one. This Mycobacterium tuberculosis (strain CDC 1551 / Oshkosh) protein is Methyl-branched lipid omega-hydroxylase (cyp124).